Consider the following 216-residue polypeptide: Cytochrome c oxidase assembly protein CtaG (216 aa).

A compositionally biased stretch (low complexity) spans 1–23 (MTDAPQHPQQPATGTPATPKAAP). Positions 1 to 24 (MTDAPQHPQQPATGTPATPKAAPR) are disordered. Residues 1-26 (MTDAPQHPQQPATGTPATPKAAPRVG) are Cytoplasmic-facing. The helical; Signal-anchor for type II membrane protein transmembrane segment at 27–49 (RDVRIGATCGLLVALMVGAAYAA) threads the bilayer. Over 50 to 216 (VPFYNWFCRA…SEPDRPGGSI (167 aa)) the chain is Periplasmic.

It belongs to the COX11/CtaG family.

It is found in the cell inner membrane. Functionally, exerts its effect at some terminal stage of cytochrome c oxidase synthesis, probably by being involved in the insertion of the copper B into subunit I. The sequence is that of Cytochrome c oxidase assembly protein CtaG from Nitrobacter hamburgensis (strain DSM 10229 / NCIMB 13809 / X14).